The sequence spans 212 residues: Holliday junction branch migration complex subunit RuvA (212 aa).

A domain I region spans residues 1 to 63 (MIAKLKGLID…EDAISLFGFL (63 aa)). Residues 64 to 142 (ETGERDWFRL…KIALGGFSPG (79 aa)) are domain II. The interval 143–155 (GIKDALSASAPLP) is flexible linker. The domain III stretch occupies residues 156-212 (AASGRMEDAVSALVNLGYKRLEAFQAVGETARELGDEADSSALIRAALKHLGKGLLG).

The protein belongs to the RuvA family. Homotetramer. Forms an RuvA(8)-RuvB(12)-Holliday junction (HJ) complex. HJ DNA is sandwiched between 2 RuvA tetramers; dsDNA enters through RuvA and exits via RuvB. An RuvB hexamer assembles on each DNA strand where it exits the tetramer. Each RuvB hexamer is contacted by two RuvA subunits (via domain III) on 2 adjacent RuvB subunits; this complex drives branch migration. In the full resolvosome a probable DNA-RuvA(4)-RuvB(12)-RuvC(2) complex forms which resolves the HJ.

The protein resides in the cytoplasm. Its function is as follows. The RuvA-RuvB-RuvC complex processes Holliday junction (HJ) DNA during genetic recombination and DNA repair, while the RuvA-RuvB complex plays an important role in the rescue of blocked DNA replication forks via replication fork reversal (RFR). RuvA specifically binds to HJ cruciform DNA, conferring on it an open structure. The RuvB hexamer acts as an ATP-dependent pump, pulling dsDNA into and through the RuvAB complex. HJ branch migration allows RuvC to scan DNA until it finds its consensus sequence, where it cleaves and resolves the cruciform DNA. The protein is Holliday junction branch migration complex subunit RuvA of Paramagnetospirillum magneticum (strain ATCC 700264 / AMB-1) (Magnetospirillum magneticum).